A 350-amino-acid polypeptide reads, in one-letter code: Ferredoxin--NADP reductase (350 aa).

Residues aspartate 49, glutamine 57, tyrosine 62, valine 102, phenylalanine 136, aspartate 303, and threonine 344 each coordinate FAD.

The protein belongs to the ferredoxin--NADP reductase type 2 family. Homodimer. FAD serves as cofactor.

The enzyme catalyses 2 reduced [2Fe-2S]-[ferredoxin] + NADP(+) + H(+) = 2 oxidized [2Fe-2S]-[ferredoxin] + NADPH. This Granulibacter bethesdensis (strain ATCC BAA-1260 / CGDNIH1) protein is Ferredoxin--NADP reductase.